The primary structure comprises 438 residues: Xylose isomerase (438 aa).

Residues His100 and Asp103 contribute to the active site. Positions 231, 267, 270, 295, 306, 308, and 338 each coordinate Mg(2+).

It belongs to the xylose isomerase family. As to quaternary structure, homotetramer. Requires Mg(2+) as cofactor.

The protein resides in the cytoplasm. The enzyme catalyses alpha-D-xylose = alpha-D-xylulofuranose. The protein is Xylose isomerase of Pseudomonas syringae pv. syringae (strain B728a).